The sequence spans 88 residues: Arminin 1b (88 aa).

Positions 1-18 are cleaved as a signal peptide; sequence MKTVLAFLFLTFIAFTHA. Residues 19–57 constitute a propeptide that is removed on maturation; that stretch reads ESYEDVKEEIKNEVEREIFEDLEEESDVLESNVRELNDA. Valine amide is present on V85.

It belongs to the arminin family. In terms of tissue distribution, expressed in entodermal epithelium along the body column.

The protein localises to the secreted. It is found in the target cell membrane. Antimicrobial peptide with a broad-spectrum antimicrobial activity. Keeps its antibacterial activity under a wide range of salt concentrations that mimic physiological conditions of human blood, which is surprising, since Hydra is an obligate freshwater animal with nearly no salt tolerance. Does not affect red blood cells. The chain is Arminin 1b from Hydra vulgaris (Hydra).